The primary structure comprises 471 residues: UDP-N-acetylmuramoylalanine--D-glutamate ligase (471 aa).

122-128 (GTNGKTT) lines the ATP pocket.

It belongs to the MurCDEF family.

It is found in the cytoplasm. The enzyme catalyses UDP-N-acetyl-alpha-D-muramoyl-L-alanine + D-glutamate + ATP = UDP-N-acetyl-alpha-D-muramoyl-L-alanyl-D-glutamate + ADP + phosphate + H(+). It functions in the pathway cell wall biogenesis; peptidoglycan biosynthesis. Cell wall formation. Catalyzes the addition of glutamate to the nucleotide precursor UDP-N-acetylmuramoyl-L-alanine (UMA). This chain is UDP-N-acetylmuramoylalanine--D-glutamate ligase, found in Streptomyces coelicolor (strain ATCC BAA-471 / A3(2) / M145).